Consider the following 393-residue polypeptide: S-adenosylmethionine synthase 1 (393 aa).

Position 9 (Glu-9) interacts with Mg(2+). His-15 lines the ATP pocket. Glu-43 contributes to the K(+) binding site. Residues Glu-56 and Gln-99 each coordinate L-methionine. ATP is bound by residues Asp-167–Lys-169, Ser-235–Phe-238, Asp-246, Arg-252–Lys-253, Ala-269, Lys-273, and Lys-277. An L-methionine-binding site is contributed by Asp-246. Position 277 (Lys-277) interacts with L-methionine.

The protein belongs to the AdoMet synthase family. In terms of assembly, homotetramer. The cofactor is Mn(2+). Mg(2+) serves as cofactor. Co(2+) is required as a cofactor. It depends on K(+) as a cofactor.

It localises to the cytoplasm. It carries out the reaction L-methionine + ATP + H2O = S-adenosyl-L-methionine + phosphate + diphosphate. Its pathway is amino-acid biosynthesis; S-adenosyl-L-methionine biosynthesis; S-adenosyl-L-methionine from L-methionine: step 1/1. Its function is as follows. Catalyzes the formation of S-adenosylmethionine from methionine and ATP. The reaction comprises two steps that are both catalyzed by the same enzyme: formation of S-adenosylmethionine (AdoMet) and triphosphate, and subsequent hydrolysis of the triphosphate. This is S-adenosylmethionine synthase 1 (SAMS1) from Brassica juncea (Indian mustard).